A 61-amino-acid chain; its full sequence is uncharacterized protein (61 aa).

The segment at 23 to 61 (VPTKWQDYKKPGPNQKYTSDGKKRRRIRRSQKSILGVRS) is disordered. Residues 44 to 53 (KKRRRIRRSQ) are compositionally biased toward basic residues.

This is an uncharacterized protein from Archaeoglobus fulgidus (strain ATCC 49558 / DSM 4304 / JCM 9628 / NBRC 100126 / VC-16).